A 226-amino-acid polypeptide reads, in one-letter code: B-cell antigen receptor complex-associated protein alpha chain (226 aa).

A signal peptide spans 1–32 (MPGGPGVLQALPATIFLLFLLSAVYLGPGCQA). Positions 33-116 (LWMHKVPASL…RVQEGNESYQ (84 aa)) constitute an Ig-like C2-type domain. Over 33-143 (LWMHKVPASL…LDMGEGTKNR (111 aa)) the chain is Extracellular. Cysteines 54 and 106 form a disulfide. Residues asparagine 57, asparagine 63, asparagine 73, asparagine 88, asparagine 97, and asparagine 112 are each glycosylated (N-linked (GlcNAc...) asparagine). Residues 144–165 (IITAEGIILLFCAVVPGTLLLF) traverse the membrane as a helical segment. The Cytoplasmic portion of the chain corresponds to 166 to 226 (RKRWQNEKLG…NIGDVQLEKP (61 aa)). One can recognise an ITAM domain in the interval 177 to 205 (DAGDEYEDENLYEGLNLDDCSMYEDISRG). Tyrosine 188 and tyrosine 199 each carry phosphotyrosine; by SRC-type Tyr-kinases. An Asymmetric dimethylarginine; by PRMT1 modification is found at arginine 204. A Phosphotyrosine; by Tyr-kinases modification is found at tyrosine 210.

Heterodimer of alpha and beta chains; disulfide-linked. Part of the B-cell antigen receptor complex where the alpha/beta chain heterodimer is non-covalently associated with an antigen-specific membrane-bound surface immunoglobulin of two heavy chains and two light chains. Interacts through its phosphorylated ITAM domain with the SH2 domains of SYK which stimulates SYK autophosphorylation and activation. Also interacts, when phosphorylated on Tyr-210, with the SH2 domain of BLNK/SLP65, bringing BLNK into proximity with SYK and allowing SYK to phosphorylate BLNK which is necessary for trafficking of the BCR to late endosomes. Interacts with Src-family tyrosine kinases including FYN and LYN, increasing their activity. Post-translationally, phosphorylated on tyrosine, serine and threonine residues upon B-cell activation. Phosphorylation of tyrosine residues by Src-family kinases is an early and essential feature of the BCR signaling cascade. The phosphorylated tyrosines serve as docking sites for SH2-domain containing kinases, leading to their activation which in turn leads to phosphorylation of downstream targets. Phosphorylated by LYN. Phosphorylation of serine and threonine residues may prevent subsequent tyrosine phosphorylation. In terms of processing, arginine methylation in the ITAM domain may interfere with the binding of SYK. It promotes signals leading to B-cell differentiation. As to expression, B-cells.

The protein localises to the cell membrane. Functionally, required in cooperation with CD79B for initiation of the signal transduction cascade activated by binding of antigen to the B-cell antigen receptor complex (BCR) which leads to internalization of the complex, trafficking to late endosomes and antigen presentation. Also required for BCR surface expression and for efficient differentiation of pro- and pre-B-cells. Stimulates SYK autophosphorylation and activation. Binds to BLNK, bringing BLNK into proximity with SYK and allowing SYK to phosphorylate BLNK. Also interacts with and increases activity of some Src-family tyrosine kinases. Represses BCR signaling during development of immature B-cells. The chain is B-cell antigen receptor complex-associated protein alpha chain (CD79A) from Homo sapiens (Human).